The chain runs to 480 residues: Acyl-lipid (8-3)-desaturase (480 aa).

A disordered region spans residues 1-30; sequence MAPHSADTAGLVPSDELRLRTSNSKGPEQE. The 75-residue stretch at 33–107 folds into the Cytochrome b5 heme-binding domain; that stretch reads LKKYTLEDVS…LAKYCIGELV (75 aa). The heme site is built by H68 and H90. The next 2 helical transmembrane spans lie at 151–171 and 173–193; these read IHPH…ASYY and AFFW…MGFF. A Histidine box-1 motif is present at residues 203 to 207; it reads HDGNH. The Histidine box-2 signature appears at 238-243; sequence HVVGHH. A run of 3 helical transmembrane segments spans residues 280 to 300, 322 to 342, and 348 to 368; these read IYLA…DDFL, IFFQ…SVYG, and TFLA…AFLF. Residues 419 to 423 carry the Histidine box-3 motif; that stretch reads QIEHH.

This sequence belongs to the fatty acid desaturase type 1 family. The cofactor is Fe(2+).

Its subcellular location is the membrane. The enzyme catalyses an (8Z,11Z,14Z)-icosatrienoyl-containing glycerolipid + 2 Fe(II)-[cytochrome b5] + O2 + 2 H(+) = (5Z,8Z,11Z,14Z)-eicosatetraenoyl-containing glycerolipid + 2 Fe(III)-[cytochrome b5] + 2 H2O. It carries out the reaction an (8Z,11Z,14Z,17Z)-eicosatetraenoyl-containing glycerolipid + 2 Fe(II)-[cytochrome b5] + O2 + 2 H(+) = a (5Z,8Z,11Z,14Z,17Z)-eicosapentaenoyl-containing glycerolipid + 2 Fe(III)-[cytochrome b5] + 2 H2O. In terms of biological role, fatty acid desaturase that introduces a cis double bond at the 5-position in 20-carbon polyunsaturated fatty acids incorporated in a glycerolipid that contain a Delta(8) double bond. This is Acyl-lipid (8-3)-desaturase from Physcomitrium patens (Spreading-leaved earth moss).